The sequence spans 448 residues: Rhodanese-like domain-containing protein 8, chloroplastic (448 aa).

Residues methionine 1 to lysine 23 constitute a chloroplast transit peptide. Residues serine 220 to tryptophan 323 form the Rhodanese domain. Catalysis depends on cysteine 283, which acts as the Cysteine persulfide intermediate.

It is found in the plastid. It localises to the chloroplast. The chain is Rhodanese-like domain-containing protein 8, chloroplastic (STR8) from Arabidopsis thaliana (Mouse-ear cress).